We begin with the raw amino-acid sequence, 730 residues long: Jacalin-related lectin 5 (730 aa).

In terms of domain architecture, Jacalin-type lectin 1 spans 1–126; it reads MSWDDGKHTK…LNSIDAHFAP (126 aa). The interval 121-450 is disordered; it reads DAHFAPAPPP…GNQWDDGTDH (330 aa). 4 stretches are compositionally biased toward low complexity: residues 138–153, 168–179, 196–207, and 248–261; these read GASG…GSAG, AGGSKPSSGSAG, and TEKN…SSGS. Residues 275–307 show a composition bias toward polar residues; it reads ETVSNIGDTESNAGGSKSNDGANNGASGIESNA. Residues 314–323 are compositionally biased toward gly residues; it reads FGAGGTGGIG. Positions 343–358 are enriched in low complexity; the sequence is DGASGIGSNDGSTGTN. Composition is skewed to polar residues over residues 366-375 and 388-416; these read DSNIEGTENN and IGNS…TGGK. Positions 417–429 are enriched in low complexity; that stretch reads ESNTGSESNTNSS. 2 consecutive Jacalin-type lectin domains span residues 430-572 and 584-727; these read PQKL…YFVP and PNKV…YFIP.

It belongs to the jacalin lectin family.

The sequence is that of Jacalin-related lectin 5 (JAL5) from Arabidopsis thaliana (Mouse-ear cress).